We begin with the raw amino-acid sequence, 185 residues long: Homeobox expressed in ES cells 1 (185 aa).

The disordered stretch occupies residues 32–69; the sequence is KKDCTTSVRPHRPWTDTCGDSEKGGNPPLHAPDLPSET. Residues 108–167 constitute a DNA-binding region (homeobox); the sequence is GRRPRTAFTQNQVEVLENVFRVNCYPGIDIREDLAQKLNLEEDRIQIWFQNRRAKMKRSR.

Belongs to the ANF homeobox family. In terms of assembly, can form heterodimers with PROP1 in binding to DNA Interacts with TLE1. High levels found in the embryonic liver, lower level expression seen in the viscera, amnion and yolk sac.

The protein resides in the nucleus. Required for the normal development of the forebrain, eyes and other anterior structures such as the olfactory placodes and pituitary gland. Possible transcriptional repressor. Binds to the palindromic PIII sequence, 5'-AGCTTGAGTCTAATTGAATTAACTGTAC-3'. HESX1 and PROP1 bind as heterodimers on this palindromic site, and, in vitro, HESX1 can antagonize PROP1 activation. In Mus musculus (Mouse), this protein is Homeobox expressed in ES cells 1 (Hesx1).